The primary structure comprises 341 residues: MKIRVGILGATGYTGLELLRMLKNHPQVKITYLSSNNFSGQSMKDIYPFAEIDILLSKIDVKEIKANCDVVFTALPAGISYDIVKSLRDENLKIIDLGADLRFDDPSLYEKWYGRTLQDYGLIKRVYGLPELYRSEIKESRFIGNPGCYPTSILLATAPILKRKLLVNGEIIVDSKSGVSGAGKKEELAYSFCEIDGSLKPYSVINHKHVPEIQEQMKKIYHSEVTVIFAPHLVPMVRGILSTIYLKTRLSADELYGLYSEFYRDEYFVHVLKPAIYPSTKWSYGSNHVFISMKKDERTDTAVLISVLDNLVKGASGQAIQNMNILFSLREDTGLTFTVYP.

Residue Cys-148 is part of the active site.

It belongs to the NAGSA dehydrogenase family. Type 1 subfamily.

Its subcellular location is the cytoplasm. The catalysed reaction is N-acetyl-L-glutamate 5-semialdehyde + phosphate + NADP(+) = N-acetyl-L-glutamyl 5-phosphate + NADPH + H(+). It functions in the pathway amino-acid biosynthesis; L-arginine biosynthesis; N(2)-acetyl-L-ornithine from L-glutamate: step 3/4. In terms of biological role, catalyzes the NADPH-dependent reduction of N-acetyl-5-glutamyl phosphate to yield N-acetyl-L-glutamate 5-semialdehyde. This Pseudothermotoga lettingae (strain ATCC BAA-301 / DSM 14385 / NBRC 107922 / TMO) (Thermotoga lettingae) protein is N-acetyl-gamma-glutamyl-phosphate reductase.